Consider the following 683-residue polypeptide: Cytochrome P450 monooxygenase htyF (683 aa).

The chain crosses the membrane as a helical span at residues 8–28; sequence PALLAASVVLAVSLVSYVIQL. N29 carries an N-linked (GlcNAc...) asparagine glycan. C481 contributes to the heme binding site. Residue N581 is glycosylated (N-linked (GlcNAc...) asparagine). A helical membrane pass occupies residues 588–608; it reads LYVFVVLVACVAALFIGIGIY.

The protein belongs to the cytochrome P450 family. It depends on heme as a cofactor.

It localises to the membrane. The protein operates within antifungal biosynthesis. In terms of biological role, cytochrome P450 monooxygenase; part of the gene cluster that mediates the de novo generation of L-homotyrosine from acetyl-CoA and 4-hydroxyphenyl-pyruvate. L-homotyrosine is a building block of echinocandin B, a fungal lipidated cyclic hexapeptide that acts as an antifungal agent. L-homotyrosine 4-hydroxyphenyl-pyruvate first undergoes an aldol-type condensation by htyA with the C-2 of acetyl-CoA followed by the release of CoA to form 2-(4-hydroxybenzyl)-malate. This is followed by isomerization of 2-(4-hydroxy-benzyl)-malate to 3-(4-hydroxybenzyl)-malate by htyD. Thereafter, 3-(4-hydroxybenzyl)-malate undergoes decarboxylation and oxidation to form 2-oxo-4-(4-hydroxybenzyl)butanoic acid, coupled to reduction of NAD(+) to NADH by htyC. The product then undergoes transamination catalyzed by htyB to form L-homotyrosine. The sequence is that of Cytochrome P450 monooxygenase htyF from Aspergillus rugulosus (Emericella rugulosa).